The following is a 565-amino-acid chain: Sulfite reductase [NADPH] hemoprotein beta-component (565 aa).

[4Fe-4S] cluster contacts are provided by Cys429, Cys435, Cys474, and Cys478. Residue Cys478 participates in siroheme binding.

Belongs to the nitrite and sulfite reductase 4Fe-4S domain family. In terms of assembly, alpha(8)-beta(8). The alpha component is a flavoprotein, the beta component is a hemoprotein. It depends on siroheme as a cofactor. Requires [4Fe-4S] cluster as cofactor.

The catalysed reaction is hydrogen sulfide + 3 NADP(+) + 3 H2O = sulfite + 3 NADPH + 4 H(+). It functions in the pathway sulfur metabolism; hydrogen sulfide biosynthesis; hydrogen sulfide from sulfite (NADPH route): step 1/1. Functionally, component of the sulfite reductase complex that catalyzes the 6-electron reduction of sulfite to sulfide. This is one of several activities required for the biosynthesis of L-cysteine from sulfate. The chain is Sulfite reductase [NADPH] hemoprotein beta-component from Shewanella baltica (strain OS223).